A 1401-amino-acid chain; its full sequence is MSDLLGILKQQGQSEEFDAIKIALASPELIRSWSYGEVKKPETINYRTFKPERDGLFCAKTFGPVKDYECLCGKYKRLKHRGVICEKCGVELALAKVRRERMGHIELASPVAHIWFLKSLPSRIGLLLDMTLRDIERVLYFEAFVVVDPGMTELERGQLLNDEAYLDAMEQYGDEFDARMGAEAIRDLLRQIDLEDEIRNLREELPTTNSETKIKKITKRLKLLEAFYESGNKPEWMIMDVLPVLPPDLRPLVPLDGGRFATSDLNDLYRRVINRNNRLKRLLDLNAPDIIVRNEKRMLQESVDALLDNGRRGRAITGTNKRPLKSLADMIKGKQGRFRQNLLGKRVDYSGRSVIVVGPTLKLHQCGLPKKMALELFKPFIFSKLEFRGLATTIKAAKKMVEREESVVWDILDDVIREHPILLNRAPTLHRLGIQAFEPVLIEGKAIQLHPLVCTAYNADFDGDQMAVHVPLTLEAQLEARSLMMSTNNILSPASGEPIIVPSQDVVLGLYYLTREKVNALGEGKIYSSAQEAQNFYEAGHLDIHAKIKIRMPKEDGETGYHLVETTVGRAILAEILPKGMPFDYINRTMTKKVISKVIDSCYRKFGLKETVIFADQLMYTGFKYATRSGASIGIEDMEIPDDKSSIIEHADNEVREIESQFRSGLVTNGERYNKVIDIWSRTNELVAKSMMSKIATEEVTDAKGNKVRQESFNPIFMMADSGARGSAAQIRQLAGMRGLMAAPDGSIIETPITANFREGLNVFQYFISTHGARKGLADTALKTANSGYLTRRLVDVAQDVVITEDDCGTDTGILMQPLIEGGDIVEPLHERVLGRVVASDVYIPTQTEPVVKAGTLLDEEWVEKLEKHGVDQVMVRSPITCQTRFGLCAKCYGRDLARGHLVNTGEAVGIIAAQSIGEPGTQLTMRTFHIGGAASRATAANNIQIKTKGVIRLHNIKTVTHENKNLVAVSRSGEVTIVDEFGRERERYKVPYGAVISAQDNSPVEAGQVIATWDPHTHPVISEVSGRLKFVDLIDGITMNRQTDELTGLSNIVIIDAKQRSAAGRDLRPMVKLVTDEGDDIYLAGTNVPAQYYLPVDAIVNFEDGSLVGIGDVIARIPQERSKTRDITGGLPRVADLFEARKPKDSAVMAEVSGLVNFGKETKGKRRLIINVSEDQCHEELIPKWRHISVFEGEHVERGEIIAEGALNPHDILRLLGVGALANYIVNEVQDVYRLQGVKINDKHIEVIVRQMLRKRVITFAGDSKFLVGEQVEESAMLQENDKLLAEGKQIARGTPILLGITKASLATESFISAASFQETTRVLTEAAVSGKVDELRGLKENVMVGRLIPAGTGYTYHQSRKAKRARAAAGGDSSATHTVTASDVEHALSEALNADNHEH.

The Zn(2+) site is built by Cys-70, Cys-72, Cys-85, and Cys-88. Residues Asp-460, Asp-462, and Asp-464 each coordinate Mg(2+). The Zn(2+) site is built by Cys-808, Cys-882, Cys-889, and Cys-892.

This sequence belongs to the RNA polymerase beta' chain family. As to quaternary structure, the RNAP catalytic core consists of 2 alpha, 1 beta, 1 beta' and 1 omega subunit. When a sigma factor is associated with the core the holoenzyme is formed, which can initiate transcription. Mg(2+) is required as a cofactor. The cofactor is Zn(2+).

It catalyses the reaction RNA(n) + a ribonucleoside 5'-triphosphate = RNA(n+1) + diphosphate. Functionally, DNA-dependent RNA polymerase catalyzes the transcription of DNA into RNA using the four ribonucleoside triphosphates as substrates. The polypeptide is DNA-directed RNA polymerase subunit beta' (Legionella pneumophila (strain Paris)).